The sequence spans 208 residues: Probable acyl-homoserine-lactone synthase (208 aa).

This sequence belongs to the autoinducer synthase family.

The enzyme catalyses a fatty acyl-[ACP] + S-adenosyl-L-methionine = an N-acyl-L-homoserine lactone + S-methyl-5'-thioadenosine + holo-[ACP] + H(+). Required for the synthesis of OHHL (N-(3-oxooctanoyl)-L-homoserine lactone), an autoinducer molecule which binds to TraR and thus acts in the control of conjugal transfer. The polypeptide is Probable acyl-homoserine-lactone synthase (traI) (Sinorhizobium fredii (strain NBRC 101917 / NGR234)).